Reading from the N-terminus, the 239-residue chain is Biosynthetic peptidoglycan transglycosylase (239 aa).

A helical membrane pass occupies residues 29–49; it reads GMFGLGALMLVWIVAYAVVPV.

The protein belongs to the glycosyltransferase 51 family.

Its subcellular location is the cell inner membrane. It catalyses the reaction [GlcNAc-(1-&gt;4)-Mur2Ac(oyl-L-Ala-gamma-D-Glu-L-Lys-D-Ala-D-Ala)](n)-di-trans,octa-cis-undecaprenyl diphosphate + beta-D-GlcNAc-(1-&gt;4)-Mur2Ac(oyl-L-Ala-gamma-D-Glu-L-Lys-D-Ala-D-Ala)-di-trans,octa-cis-undecaprenyl diphosphate = [GlcNAc-(1-&gt;4)-Mur2Ac(oyl-L-Ala-gamma-D-Glu-L-Lys-D-Ala-D-Ala)](n+1)-di-trans,octa-cis-undecaprenyl diphosphate + di-trans,octa-cis-undecaprenyl diphosphate + H(+). It functions in the pathway cell wall biogenesis; peptidoglycan biosynthesis. Functionally, peptidoglycan polymerase that catalyzes glycan chain elongation from lipid-linked precursors. The chain is Biosynthetic peptidoglycan transglycosylase from Jannaschia sp. (strain CCS1).